The chain runs to 294 residues: Dof zinc finger protein DOF4.1 (294 aa).

A Dof-type zinc finger spans residues 68–122; the sequence is RNCPRCNSSNTKFCYYNNYSLAQPRYLCKSCRRYWTEGGSLRNVPVGGGSRKNKK. Zn(2+) is bound by residues Cys-70, Cys-73, Cys-95, and Cys-98. 2 disordered regions span residues 109–178 and 247–294; these read RNVP…DKRA and MYPY…GPTW. Composition is skewed to polar residues over residues 126 to 136 and 157 to 173; these read PNSSTSSSTKN and KTHQ…SSPM. The segment covering 251–273 has biased composition (basic and acidic residues); sequence GDHEDRQQHHHVRHDDGNKKREG. A compositionally biased stretch (gly residues) spans 284–294; sequence ILGGDSGGPTW.

It is found in the nucleus. Functionally, transcription factor that binds specifically to a 5'-AA[AG]G-3' consensus core sequence. This Arabidopsis thaliana (Mouse-ear cress) protein is Dof zinc finger protein DOF4.1 (DOF4.1).